Reading from the N-terminus, the 229-residue chain is Enolase-phosphatase E1 (229 aa).

Belongs to the HAD-like hydrolase superfamily. MasA/MtnC family. Monomer. Requires Mg(2+) as cofactor.

It carries out the reaction 5-methylsulfanyl-2,3-dioxopentyl phosphate + H2O = 1,2-dihydroxy-5-(methylsulfanyl)pent-1-en-3-one + phosphate. The protein operates within amino-acid biosynthesis; L-methionine biosynthesis via salvage pathway; L-methionine from S-methyl-5-thio-alpha-D-ribose 1-phosphate: step 3/6. It participates in amino-acid biosynthesis; L-methionine biosynthesis via salvage pathway; L-methionine from S-methyl-5-thio-alpha-D-ribose 1-phosphate: step 4/6. Bifunctional enzyme that catalyzes the enolization of 2,3-diketo-5-methylthiopentyl-1-phosphate (DK-MTP-1-P) into the intermediate 2-hydroxy-3-keto-5-methylthiopentenyl-1-phosphate (HK-MTPenyl-1-P), which is then dephosphorylated to form the acireductone 1,2-dihydroxy-3-keto-5-methylthiopentene (DHK-MTPene). This is Enolase-phosphatase E1 from Pectobacterium atrosepticum (strain SCRI 1043 / ATCC BAA-672) (Erwinia carotovora subsp. atroseptica).